The primary structure comprises 609 residues: Glutamine--fructose-6-phosphate aminotransferase [isomerizing] (609 aa).

Cysteine 2 (nucleophile; for GATase activity) is an active-site residue. The 217-residue stretch at 2–218 (CGIVGAIAQR…EGDIAEITRR (217 aa)) folds into the Glutamine amidotransferase type-2 domain. SIS domains follow at residues 286–426 (ADEL…LKGL) and 458–599 (LAED…VDQP). The active-site For Fru-6P isomerization activity is lysine 604.

As to quaternary structure, homodimer.

It is found in the cytoplasm. The enzyme catalyses D-fructose 6-phosphate + L-glutamine = D-glucosamine 6-phosphate + L-glutamate. Its function is as follows. Catalyzes the first step in hexosamine metabolism, converting fructose-6P into glucosamine-6P using glutamine as a nitrogen source. The sequence is that of Glutamine--fructose-6-phosphate aminotransferase [isomerizing] from Salmonella paratyphi A (strain ATCC 9150 / SARB42).